A 474-amino-acid polypeptide reads, in one-letter code: Vasculin-like protein 1 (474 aa).

The tract at residues 17–42 is disordered; that stretch reads QSAKSPTATFEKHGEHLPRGEGRFGV. Residues 26–38 show a composition bias toward basic and acidic residues; sequence FEKHGEHLPRGEG. Phosphoserine is present on residues serine 49 and serine 76. Positions 91–191 are disordered; the sequence is GNPSGWHSSS…VWENPPSAKQ (101 aa). The segment covering 116–128 has biased composition (basic residues); that stretch reads NHRHWNGSFHSRK. A compositionally biased stretch (basic and acidic residues) spans 136–154; the sequence is PPMEIREEKKEDKVEKLQF. Serine 202 carries the post-translational modification Phosphoserine. Positions 238 to 371 are disordered; that stretch reads LVPKPVPPPS…EEGCHQNGLA (134 aa). Over residues 262 to 277 the composition is skewed to polar residues; that stretch reads GSLSSSRESAFTSPIS. The segment covering 291 to 312 has biased composition (low complexity); the sequence is SSPKESPSSTTPPIEISSSRLT. Serine 292 carries the post-translational modification Phosphoserine. Residue threonine 301 is modified to Phosphothreonine. 2 stretches are compositionally biased toward basic and acidic residues: residues 317-346 and 356-365; these read RTTD…CDKL and EPKENGEEGC. Serine 382 carries the post-translational modification Phosphoserine. The disordered stretch occupies residues 453-474; the sequence is AEFEDSDTETSSSETSDDDAWK.

Belongs to the vasculin family.

It localises to the nucleus. Possible transcription factor. This is Vasculin-like protein 1 (GPBP1L1) from Homo sapiens (Human).